We begin with the raw amino-acid sequence, 945 residues long: Splicing factor, suppressor of white-apricot homolog (945 aa).

Disordered regions lie at residues 1-28 (MYGA…GTGT) and 156-185 (DYYD…EENE). 2 stretches are compositionally biased toward basic and acidic residues: residues 9-21 (AKPE…KEEA) and 169-178 (PSKQREKNEA). The SURP motif 1 repeat unit spans residues 211 to 253 (IIERTANFVCKQGAQFEIMLKAKQARNSQFDFLRFDHYLNPYY). The disordered stretch occupies residues 271–301 (SKNEEKKKSGPTSDNEEEDDEEDGSYLHPSL). Residue serine 283 is modified to Phosphoserine. The span at 284 to 294 (DNEEEDDEEDG) shows a compositional bias: acidic residues. Lysine 315 carries the post-translational modification N6-acetyllysine. Disordered regions lie at residues 332–355 (KAQA…PSQV) and 403–448 (SSSP…PVAI). Positions 335–352 (ADSSAPAPPTADGTPAQP) are enriched in low complexity. Pro residues predominate over residues 412-426 (VPPPPGTTPPPPPTT). The span at 427–447 (AEPSSGVTSTTTTTSALAPVA) shows a compositional bias: low complexity. One copy of the SURP motif 2 repeat lies at 458–498 (VIDKLAEYVARNGLKFETSVRAKNDQRFEFLQPWHQYNAYY). 3 disordered regions span residues 512 to 564 (GSTQ…KSTV), 589 to 680 (PLEK…QAER), and 712 to 921 (DTGV…VQSK). Positions 514 to 527 (TQAASTAEEAPTET) are enriched in low complexity. Positions 528–540 (AVEESGEAGEDGA) are enriched in acidic residues. Residues 589–598 (PLEKNRVKLD) show a composition bias toward basic and acidic residues. Serine 601 and serine 621 each carry phosphoserine. Positions 615 to 630 (SSVANPSPAAAPPSVA) are enriched in low complexity. Residues 632-686 (EEKKPQLTQEELEAKQAKQKLEDRLAAAAREKLAQASKESKEKQLQAERKRKAAL) adopt a coiled-coil conformation. The residue at position 639 (threonine 639) is a Phosphothreonine. 2 stretches are compositionally biased toward basic and acidic residues: residues 643 to 679 (LEAK…LQAE) and 733 to 752 (KPPE…EERE). Composition is skewed to basic residues over residues 753-787 (KKKK…KAKH) and 795-810 (TVRR…RRRA). Basic and acidic residues predominate over residues 811-821 (HSPERRREERS). Phosphoserine occurs at positions 829 and 831. The span at 835–861 (SRKRTRSRSPHEKKKKRRSRSRTKAKA) shows a compositional bias: basic residues. Residues 871–894 (QAAQRPSAHSAHSASISPVESRGS) are compositionally biased toward low complexity. Positions 895-908 (SQERSRGVSQEKDG) are enriched in basic and acidic residues. 2 positions are modified to phosphoserine: serine 899 and serine 903. Residues 909-920 (QISSAIVSSVQS) show a composition bias toward low complexity.

The protein localises to the nucleus. In terms of biological role, plays a role as an alternative splicing regulator. Regulates its own expression at the level of RNA processing. Also regulates the splicing of fibronectin and CD45 genes. May act, at least in part, by interaction with other R/S-containing splicing factors. Represses the splicing of MAPT/Tau exon 10. The chain is Splicing factor, suppressor of white-apricot homolog (Sfswap) from Mus musculus (Mouse).